The chain runs to 396 residues: MSERHLFTSESVSEGHPDKIADQISDSILDELLKNDPDARVACETTVTTGLVVVVGEISTTAYIDIQKVVRKTIKDIGYVGGEYGFDGENCAVIVAIDEQSPDIAQGVDDSLETREGHEDRLNQIGAGDQGLMFGYATNETEELMPLPIMLSHHLMQRIAKLRKEQVISYLRPDAKAEVTVEYDDNDHPVRVDTVVLSTQHDPDVTLEQIRQDVIEQVIKAVIPATLLDENTNFYINPTGRFVIGGPQGDAGLTGRKIIVDTYGGAARHGGGAFSGKDATKVDRSASYAARYIAKNIVAAKLAERVEVQIAYAIGVAEPVSVMVDTFGTGTVSEEKLTQAVRKIFDLRPAGIIEMLDLKRPIYKQTAAYGHFGRTDVELPWEKTDKVEALNDFFKN.

His16 provides a ligand contact to ATP. Asp18 provides a ligand contact to Mg(2+). Glu44 is a binding site for K(+). L-methionine contacts are provided by Glu57 and Gln100. The segment at Gln100–Asp110 is flexible loop. ATP-binding positions include Asp174–Lys176, Arg241–Phe242, Asp250, Arg256–Lys257, Ala273, and Lys277. L-methionine is bound at residue Asp250. Lys281 serves as a coordination point for L-methionine.

It belongs to the AdoMet synthase family. As to quaternary structure, homotetramer; dimer of dimers. Mg(2+) is required as a cofactor. The cofactor is K(+).

The protein resides in the cytoplasm. It carries out the reaction L-methionine + ATP + H2O = S-adenosyl-L-methionine + phosphate + diphosphate. It participates in amino-acid biosynthesis; S-adenosyl-L-methionine biosynthesis; S-adenosyl-L-methionine from L-methionine: step 1/1. Its function is as follows. Catalyzes the formation of S-adenosylmethionine (AdoMet) from methionine and ATP. The overall synthetic reaction is composed of two sequential steps, AdoMet formation and the subsequent tripolyphosphate hydrolysis which occurs prior to release of AdoMet from the enzyme. The protein is S-adenosylmethionine synthase of Pediococcus pentosaceus (strain ATCC 25745 / CCUG 21536 / LMG 10740 / 183-1w).